The following is a 430-amino-acid chain: Serine--tRNA ligase (430 aa).

237–239 (TAE) is an L-serine binding site. 268 to 270 (RSE) contributes to the ATP binding site. E291 contributes to the L-serine binding site. ATP is bound at residue 355–358 (EISS). Residue S391 participates in L-serine binding.

It belongs to the class-II aminoacyl-tRNA synthetase family. Type-1 seryl-tRNA synthetase subfamily. In terms of assembly, homodimer. The tRNA molecule binds across the dimer.

Its subcellular location is the cytoplasm. It catalyses the reaction tRNA(Ser) + L-serine + ATP = L-seryl-tRNA(Ser) + AMP + diphosphate + H(+). The enzyme catalyses tRNA(Sec) + L-serine + ATP = L-seryl-tRNA(Sec) + AMP + diphosphate + H(+). It functions in the pathway aminoacyl-tRNA biosynthesis; selenocysteinyl-tRNA(Sec) biosynthesis; L-seryl-tRNA(Sec) from L-serine and tRNA(Sec): step 1/1. Its function is as follows. Catalyzes the attachment of serine to tRNA(Ser). Is also able to aminoacylate tRNA(Sec) with serine, to form the misacylated tRNA L-seryl-tRNA(Sec), which will be further converted into selenocysteinyl-tRNA(Sec). This is Serine--tRNA ligase from Salmonella heidelberg (strain SL476).